A 383-amino-acid chain; its full sequence is Protein COS5 (383 aa).

Topologically, residues 1–42 (MKENELKNEKSVDVLSFKQLESQKIVLPQDLFRSSFTWFCYE) are cytoplasmic. The chain crosses the membrane as a helical span at residues 43-63 (IYKSLAFPIWMLLWLPLSVWW). The Extracellular segment spans residues 64–72 (KLSNNCIYP). A helical transmembrane segment spans residues 73 to 93 (LIVSLLVLFLGPIFVLVICGL). The Cytoplasmic segment spans residues 94 to 232 (SRKRSLSKQL…RSKLTWFLKR (139 aa)). A helical membrane pass occupies residues 233–253 (IFTIYSLPLWLAFLNCICVSQ). Residue histidine 254 is a topological domain, extracellular. Residues 255-275 (FCLAFRILCPGLFFLMMVWLF) form a helical membrane-spanning segment. The Cytoplasmic portion of the chain corresponds to 276–383 (QNMRTTALLV…SRNEESLMKK (108 aa)).

Belongs to the DUP/COS family.

The protein localises to the membrane. The chain is Protein COS5 (COS5) from Saccharomyces cerevisiae (strain ATCC 204508 / S288c) (Baker's yeast).